The chain runs to 525 residues: Ankyrin repeat domain-containing protein SOWAHC (525 aa).

A disordered region spans residues 84 to 263; sequence CEGPSEPSGD…EESSGGGSVT (180 aa). The residue at position 88 (Ser-88) is a Phosphoserine. Residues 101 to 112 show a composition bias toward low complexity; sequence AEPEAPDGPAGP. Residues Ser-126, Ser-213, and Ser-226 each carry the phosphoserine modification. The segment covering 230–241 has biased composition (gly residues); that stretch reads SSGGGRGRGGGD. Residues 242–251 are compositionally biased toward low complexity; that stretch reads SDSASVASSS. 2 ANK repeats span residues 301-330 and 340-370; these read TGFT…KHQL and GGYT…DVDI. The disordered stretch occupies residues 434–525; the sequence is DGGDHHHHHH…TLRPKSNVFG (92 aa). Residues 468 to 477 show a composition bias toward basic residues; it reads IKPRLNKIRF. A compositionally biased stretch (basic and acidic residues) spans 489-509; it reads RDPEQPLEGRGEEGVGEERPV.

The protein belongs to the SOWAH family.

This is Ankyrin repeat domain-containing protein SOWAHC (SOWAHC) from Homo sapiens (Human).